A 141-amino-acid polypeptide reads, in one-letter code: Nucleoside diphosphate kinase (141 aa).

ATP-binding residues include Lys-11, Phe-59, Arg-87, Thr-93, Arg-104, and Asn-114. His-117 serves as the catalytic Pros-phosphohistidine intermediate.

Belongs to the NDK family. Homotetramer. Mg(2+) is required as a cofactor.

Its subcellular location is the cytoplasm. The catalysed reaction is a 2'-deoxyribonucleoside 5'-diphosphate + ATP = a 2'-deoxyribonucleoside 5'-triphosphate + ADP. It carries out the reaction a ribonucleoside 5'-diphosphate + ATP = a ribonucleoside 5'-triphosphate + ADP. Its function is as follows. Major role in the synthesis of nucleoside triphosphates other than ATP. The ATP gamma phosphate is transferred to the NDP beta phosphate via a ping-pong mechanism, using a phosphorylated active-site intermediate. The protein is Nucleoside diphosphate kinase of Pseudomonas putida (strain W619).